The primary structure comprises 56 residues: Large ribosomal subunit protein bL32 (56 aa).

Residues 1-26 form a disordered region; that stretch reads MAVQKSKVTRSRRGQRRSHDALTAAA. Basic residues predominate over residues 7–16; the sequence is KVTRSRRGQR.

The protein belongs to the bacterial ribosomal protein bL32 family.

The protein is Large ribosomal subunit protein bL32 (rpmF) of Moritella marina (Vibrio marinus).